We begin with the raw amino-acid sequence, 134 residues long: Complexin-1 (134 aa).

2 disordered regions span residues 1–60 (MEFV…AERE) and 74–114 (KKEE…EEDE). Residues 15 to 60 (DMGKMLGGDEEKDPDAAKKEEERQEALRQAEEERKAKYAKMEAERE) are compositionally biased toward basic and acidic residues. Positions 29–64 (DAAKKEEERQEALRQAEEERKAKYAKMEAEREVMRQ) form a coiled coil. The interaction with the SNARE complex stretch occupies residues 48–70 (RKAKYAKMEAEREVMRQGIRDKY).

Belongs to the complexin/synaphin family. In terms of assembly, binds to the SNARE core complex containing SNAP25, VAMP2 and STX1A. As to expression, nervous system, and pancreatic islet cells. Present in many brain regions, including hippocampus and cerebellum. In the retina, present at conventional amacrine cell synapses (at protein level).

It localises to the cytoplasm. Its subcellular location is the cytosol. The protein resides in the perikaryon. It is found in the presynapse. Functionally, positively regulates a late step in exocytosis of various cytoplasmic vesicles, such as synaptic vesicles and other secretory vesicles. Organizes the SNAREs into a cross-linked zigzag topology that, when interposed between the vesicle and plasma membranes, is incompatible with fusion, thereby preventing SNAREs from releasing neurotransmitters until an action potential arrives at the synapse. Also involved in glucose-induced secretion of insulin by pancreatic beta-cells. Essential for motor behavior. In Mus musculus (Mouse), this protein is Complexin-1 (Cplx1).